Reading from the N-terminus, the 338-residue chain is NAD kinase (338 aa).

Asp66 acts as the Proton acceptor in catalysis. NAD(+)-binding positions include 66–67 (DG), Arg71, 141–142 (ND), Lys152, Asp171, 182–187 (TAYAFS), and Ala206. The segment at 317 to 338 (GDAGVAGTEPDKPGERDGKAGA) is disordered. Over residues 325-338 (EPDKPGERDGKAGA) the composition is skewed to basic and acidic residues.

This sequence belongs to the NAD kinase family. A divalent metal cation serves as cofactor.

The protein localises to the cytoplasm. It catalyses the reaction NAD(+) + ATP = ADP + NADP(+) + H(+). Involved in the regulation of the intracellular balance of NAD and NADP, and is a key enzyme in the biosynthesis of NADP. Catalyzes specifically the phosphorylation on 2'-hydroxyl of the adenosine moiety of NAD to yield NADP. This chain is NAD kinase, found in Bifidobacterium longum subsp. infantis (strain ATCC 15697 / DSM 20088 / JCM 1222 / NCTC 11817 / S12).